Here is a 608-residue protein sequence, read N- to C-terminus: Fatty acid amide hydrolase (608 aa).

Catalysis depends on charge relay system residues Lys-206 and Ser-282. Residue Gly-303–Ser-306 participates in substrate binding. Ser-306 serves as the catalytic Acyl-ester intermediate.

It belongs to the amidase family. In terms of assembly, forms homodimers.

The protein resides in the endoplasmic reticulum membrane. It is found in the cell membrane. It carries out the reaction N-(9Z,12Z-octadecadienoyl)-ethanolamine + H2O = ethanolamine + (9Z,12Z)-octadecadienoate. The catalysed reaction is N-hexadecanoylethanolamine + H2O = ethanolamine + hexadecanoate. It catalyses the reaction N-dodecanoylethanolamine + H2O = dodecanoate + ethanolamine. Its activity is regulated as follows. Inhibited by methyl arachidonyl fluorophosphonate (MAFP). Catalyzes the hydrolysis of bioactive endogenous fatty acid amides to their corresponding acids. The hydrolysis of endogenous amidated lipids terminates their participation as lipid mediators in various signaling systems. Converts a wide range of N-acylethanolamines (NAEs) to their corresponding free fatty acids and ethanolamine. This chain is Fatty acid amide hydrolase, found in Oryza sativa subsp. indica (Rice).